The chain runs to 353 residues: Pleckstrin-2 (353 aa).

Residue methionine 1 is modified to N-acetylmethionine. Residues 4–104 (GVLKEGFLVK…WAFEITGAIH (101 aa)) form the PH 1 domain. Residue serine 120 is modified to Phosphoserine. The DEP domain maps to 139 to 225 (TSTGIRPSPN…DSTALYTFAE (87 aa)). The PH 2 domain maps to 247–353 (TVVKQGYLSK…EWIEAIKKLT (107 aa)).

As to expression, ubiquitous. Most abundant in the thymus, large bowel, small bowel, stomach, and prostate.

It localises to the cell projection. Its subcellular location is the lamellipodium membrane. It is found in the cytoplasm. The protein resides in the cytoskeleton. Functionally, may help orchestrate cytoskeletal arrangement. Contribute to lamellipodia formation. Overexpression of pleckstrin 2 causes large lamellipodia and peripheral ruffle formation. This is Pleckstrin-2 (Plek2) from Mus musculus (Mouse).